A 635-amino-acid polypeptide reads, in one-letter code: MSSDIKIKVQSFGRFLSNMVMPNIGAFIAWGIITALFIPTGWLPNETLAKLVGPMITYLLPLLIGYTGGKLVGGERGGVVGAITTMGVIVGADMPMFLGSMIAGPLGGYCIKKFDNWVDGKIKSGFEMLVNNFSAGIIGMILAILAFLGIGPAVEVLSKILAAGVNFMVAHDMLPLASIFVEPAKILFLNNAINHGIFSPLGIQQSHELGKSIFFLIEANPGPGMGVLLAYMFFGRGSAKQSAGGAAIIHFLGGIHEIYFPYVLMNPRLILAVILGGMTGVFTLTILNGGLVSPASPGSILAVLAMTPKGAYFANIAAIIAAMAVSFVVSAVLFKTSKVKERSDIEAATRRMHDMKAESKGASPLAAGNVTNDLSHVRKIIVACDAGMGSSAMGAGVLRKKVQDAGLSNISVTNSAINNLPPDVDLVITHRDLTERAMRQVPQAQHISLTNFLDSGLYTSLTERLVAAQRHIDNEVKVTDSLKDSFDDTNNNLFQLGADNIFLGRKAATKEEANSFAGEQLVKGGYVEPEYVQAMLDREKLTSTYLGESIAVPHGTIEAKDRVLKTGVVFCQYPEGVRFGEEEDEVARLVIGIAARNNEHIQVITSLTNALDDETVIERLAKTTSVDEVLALLNK.

Residues Phe12–Arg342 form the PTS EIIC type-2 domain. 6 consecutive transmembrane segments (helical) span residues Ile24–Asn45, Lys50–Lys70, Ser134–Glu155, Val165–Lys185, Val273–Val292, and Phe313–Phe334. The PTS EIIB type-2 domain maps to Arg378–Asp473. Residue Cys384 is the Phosphocysteine intermediate; for EIIB activity of the active site. The residue at position 384 (Cys384) is a Phosphocysteine; by EIIA. The 142-residue stretch at Phe494 to Lys635 folds into the PTS EIIA type-2 domain. Catalysis depends on His554, which acts as the Tele-phosphohistidine intermediate; for EIIA activity. Phosphohistidine; by HPr is present on His554.

Homodimer. Post-translationally, an intramolecular phosphotransfer takes places between His-554 and Cys-384.

The protein localises to the cell inner membrane. It carries out the reaction D-mannitol(out) + N(pros)-phospho-L-histidyl-[protein] = D-mannitol 1-phosphate(in) + L-histidyl-[protein]. Its function is as follows. The phosphoenolpyruvate-dependent sugar phosphotransferase system (sugar PTS), a major carbohydrate active transport system, catalyzes the phosphorylation of incoming sugar substrates concomitantly with their translocation across the cell membrane. This system is involved in D-mannitol transport. This chain is PTS system mannitol-specific EIICBA component, found in Klebsiella pneumoniae.